A 284-amino-acid polypeptide reads, in one-letter code: D-tagatose-1,6-bisphosphate aldolase subunit GatY (284 aa).

Asp82 acts as the Proton donor in catalysis. Zn(2+) contacts are provided by His83 and His180. Position 181 (Gly181) interacts with dihydroxyacetone phosphate. Zn(2+) is bound at residue His208. Residues 209 to 211 (GAS) and 230 to 233 (NVAT) each bind dihydroxyacetone phosphate.

It belongs to the class II fructose-bisphosphate aldolase family. TagBP aldolase GatY subfamily. As to quaternary structure, forms a complex with GatZ. It depends on Zn(2+) as a cofactor.

It carries out the reaction D-tagatofuranose 1,6-bisphosphate = D-glyceraldehyde 3-phosphate + dihydroxyacetone phosphate. It functions in the pathway carbohydrate metabolism; D-tagatose 6-phosphate degradation; D-glyceraldehyde 3-phosphate and glycerone phosphate from D-tagatose 6-phosphate: step 2/2. Catalytic subunit of the tagatose-1,6-bisphosphate aldolase GatYZ, which catalyzes the reversible aldol condensation of dihydroxyacetone phosphate (DHAP or glycerone-phosphate) with glyceraldehyde 3-phosphate (G3P) to produce tagatose 1,6-bisphosphate (TBP). Requires GatZ subunit for full activity and stability. Is involved in the catabolism of galactitol. In Escherichia coli (strain SMS-3-5 / SECEC), this protein is D-tagatose-1,6-bisphosphate aldolase subunit GatY.